The following is a 26-amino-acid chain: PRKCH upstream open reading frame 2 (26 aa).

Interacts with protein kinase C eta as well as other protein kinases including PRKCD, PRKCQ and PRKCE but not with PRKCG or PRKCZ; the interactions lead to inhibition of kinase activity.

Product of an upstream open reading frame (ORF) of PRKCH which regulates translation of the downstream protein kinase C eta (PKC-eta) ORF. Functions as a repressive element that maintains low basal levels of PKC-eta in growing cells but enhances its expression during stress conditions induced by amino acid starvation in a EIF2AK4/GCN2-dependent manner. In addition to its role in regulating PKC-eta translation, also inhibits the kinase activity of PKC-eta as well as other protein kinases including PRKCD, PRKCQ and PRKCE but not PRKCA, PRKCG or PRKCZ. This Homo sapiens (Human) protein is PRKCH upstream open reading frame 2.